The primary structure comprises 337 residues: Angiopoietin-related protein 7 (337 aa).

Positions 1–21 (MLRETWLCVILVAFVSHPVWL) are cleaved as a signal peptide. Residues 30–110 (QLKAAGCCEE…DIMQLQAAQT (81 aa)) are a coiled coil. N-linked (GlcNAc...) asparagine glycosylation occurs at N49. The 222-residue stretch at 113 to 334 (QTSADAIYDC…RVEMKIRPEA (222 aa)) folds into the Fibrinogen C-terminal domain. The cysteines at positions 122 and 153 are disulfide-linked. N-linked (GlcNAc...) asparagine glycosylation is found at N244 and N258. Residues C276 and C289 are joined by a disulfide bond. N320 is a glycosylation site (N-linked (GlcNAc...) asparagine).

In terms of assembly, homotetramer; disulfide-linked.

It is found in the secreted. Has a role in the formation and organization of the extracellular matrix. In the eye, it functions as a mediator of dexamethasone-induced matrix deposition in the trabecular meshwork, the tissue responsible for the outflow of the ocular aqueous humor and for the maintenance of intraocular pressure. Is a negative regulator of angiogenesis in the cornea, and plays a major role in maintaining corneal avascularity and transparency. The polypeptide is Angiopoietin-related protein 7 (Angptl7) (Mus musculus (Mouse)).